The following is a 213-amino-acid chain: Ribosomal RNA small subunit methyltransferase G (213 aa).

S-adenosyl-L-methionine-binding positions include Gly-75, Phe-80, 128-129 (IE), and Arg-144.

The protein belongs to the methyltransferase superfamily. RNA methyltransferase RsmG family.

It is found in the cytoplasm. It carries out the reaction guanosine(527) in 16S rRNA + S-adenosyl-L-methionine = N(7)-methylguanosine(527) in 16S rRNA + S-adenosyl-L-homocysteine. Functionally, specifically methylates the N7 position of guanine in position 527 of 16S rRNA. This chain is Ribosomal RNA small subunit methyltransferase G, found in Brucella suis biovar 1 (strain 1330).